A 266-amino-acid polypeptide reads, in one-letter code: Type III pantothenate kinase (266 aa).

D6–V13 provides a ligand contact to ATP. G112 to R115 is a binding site for substrate. The active-site Proton acceptor is the D114. D134 is a K(+) binding site. Position 137 (T137) interacts with ATP. T190 contributes to the substrate binding site.

The protein belongs to the type III pantothenate kinase family. Homodimer. Requires NH4(+) as cofactor. K(+) is required as a cofactor.

The protein resides in the cytoplasm. It carries out the reaction (R)-pantothenate + ATP = (R)-4'-phosphopantothenate + ADP + H(+). It participates in cofactor biosynthesis; coenzyme A biosynthesis; CoA from (R)-pantothenate: step 1/5. Catalyzes the phosphorylation of pantothenate (Pan), the first step in CoA biosynthesis. This Desulfotalea psychrophila (strain LSv54 / DSM 12343) protein is Type III pantothenate kinase.